We begin with the raw amino-acid sequence, 219 residues long: MVDLKTKAFDISQNFTIALDGPAASGKGTIGLILAKKFSLKYFQSSIVYRQLAFDCISQKIDVTDIDAVIALSKELKLDNNFDLENENIGNIASQIAVISEIRNNLNKYLINLVKTTPRMIMEGRDIGTVVAPDADLKIFITANPQIRAERRYKQLQAKGKTCILAEILQQIILRDKRDKERKAAPLLPASDALIIDTSKLSAMEVVEEVTNYIKNKIT.

21-29 (GPAASGKGT) is a binding site for ATP.

It belongs to the cytidylate kinase family. Type 1 subfamily.

The protein resides in the cytoplasm. It carries out the reaction CMP + ATP = CDP + ADP. The enzyme catalyses dCMP + ATP = dCDP + ADP. This chain is Cytidylate kinase, found in Rickettsia rickettsii (strain Iowa).